A 363-amino-acid chain; its full sequence is MTANPSLVLNKIDDISFETYDAPEISEPTDVLVQVKKTGICGSDIHFYAHGRIGNFVLTKPMVLGHESAGTVVQVGKGVTSLKVGDNVAIEPGIPSRFSDEYKSGHYNLCPHMAFAATPNSKEGEPNPPGTLCKYFKSPEDFLVKLPDHVSLELGALVEPLSVGVHASKLGSVAFGDYVAVFGAGPVGLLAAAVAKTFGAKGVIVVDIFDNKLKMAKDIGAATHTFNSKTGGSEELIKAFGGNVPNVVLECTGAEPCIKLGVDAIAPGGRFVQVGNAAGPVSFPITVFAMKELTLFGSFRYGFNDYKTAVGIFDTNYQNGRENAPIDFEQLITHRYKFKDAIEAYDLVRAGKGAVKCLIDGPE.

Residues cysteine 41, histidine 66, and glutamate 159 each coordinate Zn(2+). An NAD(+)-binding site is contributed by 183 to 188; that stretch reads GAGPVG.

It belongs to the zinc-containing alcohol dehydrogenase family. Requires Zn(2+) as cofactor.

The catalysed reaction is xylitol + NAD(+) = D-xylulose + NADH + H(+). It participates in carbohydrate degradation; L-arabinose degradation via L-arabinitol; D-xylulose 5-phosphate from L-arabinose (fungal route): step 4/5. This chain is D-xylulose reductase (XYL2), found in Scheffersomyces stipitis (strain ATCC 58785 / CBS 6054 / NBRC 10063 / NRRL Y-11545) (Yeast).